The chain runs to 43 residues: Potassium channel toxin gamma-KTx 3.3 (43 aa).

4 cysteine pairs are disulfide-bonded: C5–C23, C11–C34, C20–C39, and C24–C41.

This sequence belongs to the ergtoxin family. Gamma-KTx 3 subfamily. As to expression, expressed by the venom gland.

Its subcellular location is the secreted. In terms of biological role, blocks Kv11/ERG potassium channels. The polypeptide is Potassium channel toxin gamma-KTx 3.3 (Centruroides sculpturatus (Arizona bark scorpion)).